The chain runs to 147 residues: 2-amino-4-hydroxy-6-hydroxymethyldihydropteridine pyrophosphokinase (147 aa).

Belongs to the HPPK family.

The catalysed reaction is 6-hydroxymethyl-7,8-dihydropterin + ATP = (7,8-dihydropterin-6-yl)methyl diphosphate + AMP + H(+). It functions in the pathway cofactor biosynthesis; tetrahydrofolate biosynthesis; 2-amino-4-hydroxy-6-hydroxymethyl-7,8-dihydropteridine diphosphate from 7,8-dihydroneopterin triphosphate: step 4/4. Its function is as follows. Catalyzes the transfer of pyrophosphate from adenosine triphosphate (ATP) to 6-hydroxymethyl-7,8-dihydropterin, an enzymatic step in folate biosynthesis pathway. This Porphyromonas gingivalis (strain ATCC 33277 / DSM 20709 / CIP 103683 / JCM 12257 / NCTC 11834 / 2561) protein is 2-amino-4-hydroxy-6-hydroxymethyldihydropteridine pyrophosphokinase (folK).